The sequence spans 443 residues: Ribulose bisphosphate carboxylase large chain (443 aa).

Substrate-binding residues include Asn89 and Thr139. The active-site Proton acceptor is Lys141. Position 143 (Lys143) interacts with substrate. Mg(2+) contacts are provided by Lys167, Asp169, and Glu170. Lys167 is subject to N6-carboxylysine. The Proton acceptor role is filled by His260. Arg261, His293, and Ser345 together coordinate substrate.

The protein belongs to the RuBisCO large chain family. Type I subfamily. In terms of assembly, heterohexadecamer of 8 large chains and 8 small chains; disulfide-linked. The disulfide link is formed within the large subunit homodimers. Mg(2+) serves as cofactor. Post-translationally, the disulfide bond which can form in the large chain dimeric partners within the hexadecamer appears to be associated with oxidative stress and protein turnover.

Its subcellular location is the plastid. It is found in the chloroplast. The enzyme catalyses 2 (2R)-3-phosphoglycerate + 2 H(+) = D-ribulose 1,5-bisphosphate + CO2 + H2O. The catalysed reaction is D-ribulose 1,5-bisphosphate + O2 = 2-phosphoglycolate + (2R)-3-phosphoglycerate + 2 H(+). Functionally, ruBisCO catalyzes two reactions: the carboxylation of D-ribulose 1,5-bisphosphate, the primary event in carbon dioxide fixation, as well as the oxidative fragmentation of the pentose substrate in the photorespiration process. Both reactions occur simultaneously and in competition at the same active site. The sequence is that of Ribulose bisphosphate carboxylase large chain from Buddleja davidii (Butterfly bush).